The primary structure comprises 148 residues: Large ribosomal subunit protein bL9 (148 aa).

This sequence belongs to the bacterial ribosomal protein bL9 family.

Functionally, binds to the 23S rRNA. This Bacillus mycoides (strain KBAB4) (Bacillus weihenstephanensis) protein is Large ribosomal subunit protein bL9.